The following is a 431-amino-acid chain: MGNNIKVTFNPDKIAAWWPAVGTYYTTTYPQNQSVFQPGIYQTTSLINPKNQQELDSVLINRYKQIDWNTWQGFPVDQKFSLVSRDPPPKPYINQSAQTFEIKPGPIIVPGIRDIPRGLVPPQTPTNRDQGRKPTPPTPPLRDTHPHLTMKNQTFHLQGFVDGLRDLTTTERQHNAYGDPFTTLSPAVPTVSTILSPPSTTGDPALSPEMSPSSLLGLLAGLQVVYFLWTKILTIAQNLDWWWTSLSFPGGIPECTGQNSQFQTCKHLPTSCPPTCNGFRWMYLRRFIIYLLVLLLCLIFLLVLLDWKGFIPVCPLQPTTETTVNCRQCTISAQDMYTPPYCCCLKPTAGNCTCWPIPSSWALGNYLWEWALARFSWLNLLVPLLQWLGGISLIAWFLLIWMIWFWGPALLSILPPFIPIFVLFFLIWVYI.

Glycine 2 carries N-myristoyl glycine; by host lipidation. A pre-S1 region spans residues 2 to 148; that stretch reads GNNIKVTFNP…PPLRDTHPHL (147 aa). The pre-S stretch occupies residues 2-207; the sequence is GNNIKVTFNP…PSTTGDPALS (206 aa). The Virion surface; in external conformation segment spans residues 2–214; sequence GNNIKVTFNP…ALSPEMSPSS (213 aa). Topologically, residues 2-286 are intravirion; in internal conformation; the sequence is GNNIKVTFNP…NGFRWMYLRR (285 aa). N-linked (GlcNAc...) asparagine glycosylation is present at asparagine 3. Residues 115–147 are disordered; that stretch reads IPRGLVPPQTPTNRDQGRKPTPPTPPLRDTHPH. The pre-S2 stretch occupies residues 149-207; sequence TMKNQTFHLQGFVDGLRDLTTTERQHNAYGDPFTTLSPAVPTVSTILSPPSTTGDPALS. The chain crosses the membrane as a helical span at residues 215–235; it reads LLGLLAGLQVVYFLWTKILTI. At 236–286 the chain is on the intravirion; in external conformation side; that stretch reads AQNLDWWWTSLSFPGGIPECTGQNSQFQTCKHLPTSCPPTCNGFRWMYLRR. A helical membrane pass occupies residues 287-307; the sequence is FIIYLLVLLLCLIFLLVLLDW. Over 308–379 the chain is Virion surface; that stretch reads KGFIPVCPLQ…WALARFSWLN (72 aa). Residue asparagine 351 is glycosylated (N-linked (GlcNAc...) asparagine; by host). Residues 380–400 form a helical membrane-spanning segment; it reads LLVPLLQWLGGISLIAWFLLI. The Intravirion portion of the chain corresponds to 401–406; sequence WMIWFW. A helical membrane pass occupies residues 407–429; that stretch reads GPALLSILPPFIPIFVLFFLIWV. The Virion surface portion of the chain corresponds to 430–431; sequence YI.

This sequence belongs to the orthohepadnavirus major surface antigen family. As to quaternary structure, in its internal form (Li-HBsAg), interacts with the capsid protein and with the isoform S. Interacts with host chaperone CANX. Associates with host chaperone CANX through its pre-S2 N glycan; this association may be essential for isoform M proper secretion. In terms of assembly, interacts with isoform L. Interacts with the antigens of satellite virus HDV (HDVAgs); this interaction is required for encapsidation of HDV genomic RNA. Post-translationally, isoform M is N-terminally acetylated by host at a ratio of 90%, and N-glycosylated by host at the pre-S2 region. In terms of processing, myristoylated.

The protein localises to the virion membrane. In terms of biological role, the large envelope protein exists in two topological conformations, one which is termed 'external' or Le-HBsAg and the other 'internal' or Li-HBsAg. In its external conformation the protein attaches the virus to cell receptors and thereby initiating infection. This interaction determines the species specificity and liver tropism. This attachment induces virion internalization predominantly through caveolin-mediated endocytosis. The large envelope protein also assures fusion between virion membrane and endosomal membrane. In its internal conformation the protein plays a role in virion morphogenesis and mediates the contact with the nucleocapsid like a matrix protein. The middle envelope protein plays an important role in the budding of the virion. It is involved in the induction of budding in a nucleocapsid independent way. In this process the majority of envelope proteins bud to form subviral lipoprotein particles of 22 nm of diameter that do not contain a nucleocapsid. The chain is Large envelope protein from Marmota monax (Woodchuck).